Here is a 368-residue protein sequence, read N- to C-terminus: MKILVLGATGSIGKQAIDVICQLKYQLVGFSYYQNHNEANNILKQLNPNYVLCHSDPKYNKNVKSDLIELIDKSKPKVIINAINGYHGIEASLIALSKKKDLLLANKESLVIAGSQLEAIRKDTKTTIYPIDSEHSALYDLLKDKKKNQIKQLMITASGAGYFNKDISELRKLTYNDLLNHPNWKMGAEISINSATFVNKVYEIVEAYHLFKIKDIIPVVERSSTIHAGVIYQDNSIHFHATTNDMRWAIQSALTKFDNRTNVVQSLDLYQKTIQFEKIDFEQYPIFKIAYDILKNPYTTRGAVLTCINEHVVKLFQKQKINFLQITELISNFYWNYQHKKIDNIWQINDLIFKIKAAISSKYAYLDK.

Positions 9, 10, 11, 12, 35, and 106 each coordinate NADPH. K107 is a 1-deoxy-D-xylulose 5-phosphate binding site. E108 contacts NADPH. A Mn(2+)-binding site is contributed by D132. 4 residues coordinate 1-deoxy-D-xylulose 5-phosphate: S133, E134, S158, and H181. E134 is a binding site for Mn(2+). Position 187 (G187) interacts with NADPH. Positions 194, 199, 200, and 203 each coordinate 1-deoxy-D-xylulose 5-phosphate. Residue E203 participates in Mn(2+) binding.

The protein belongs to the DXR family. Mg(2+) is required as a cofactor. The cofactor is Mn(2+).

The enzyme catalyses 2-C-methyl-D-erythritol 4-phosphate + NADP(+) = 1-deoxy-D-xylulose 5-phosphate + NADPH + H(+). The protein operates within isoprenoid biosynthesis; isopentenyl diphosphate biosynthesis via DXP pathway; isopentenyl diphosphate from 1-deoxy-D-xylulose 5-phosphate: step 1/6. Functionally, catalyzes the NADPH-dependent rearrangement and reduction of 1-deoxy-D-xylulose-5-phosphate (DXP) to 2-C-methyl-D-erythritol 4-phosphate (MEP). This is 1-deoxy-D-xylulose 5-phosphate reductoisomerase from Mycoplasmoides gallisepticum (strain R(low / passage 15 / clone 2)) (Mycoplasma gallisepticum).